Here is a 36-residue protein sequence, read N- to C-terminus: Photosystem I reaction center subunit VIII (36 aa).

The chain crosses the membrane as a helical span at residues 9–29; that stretch reads ILVPLVGLIFPALSMALLFIY.

It belongs to the PsaI family.

Its subcellular location is the plastid. The protein resides in the chloroplast thylakoid membrane. In terms of biological role, may help in the organization of the PsaL subunit. The protein is Photosystem I reaction center subunit VIII of Pyropia yezoensis (Susabi-nori).